The chain runs to 78 residues: Large ribosomal subunit protein bL28 (78 aa).

Belongs to the bacterial ribosomal protein bL28 family.

The chain is Large ribosomal subunit protein bL28 from Synechococcus sp. (strain WH7803).